Consider the following 659-residue polypeptide: Crossover junction endonuclease MUS81 (659 aa).

The Helix-hairpin-helix motif 1 signature appears at 59–78 (KDLSQIKGFGKWMVKLMKGY). Positions 404–503 (ILILDDREKF…KKLIYILEGD (100 aa)) constitute an ERCC4 domain. Positions 585-622 (TISDVFAIQLMQVPQVTEEIAIAVLDMYPTLLSLASAY) match the Helix-hairpin-helix motif 2 motif.

This sequence belongs to the XPF family. In terms of assembly, forms a heterodimer with EME1A or EME1B. Mg(2+) is required as a cofactor. Requires Ca(2+) as cofactor. As to expression, ubiquitous but preferentially expressed in young flowers buds, notably in anthers.

Its subcellular location is the nucleus. The protein resides in the nucleolus. Its function is as follows. Interacts with EME1 to form a DNA structure-specific endonuclease with substrate preference for branched DNA structures with a 5'-end at the branch nick. Typical substrates include 3'-flap structures, D-loops, replication forks, nicked Holliday junctions and also intact Holliday junctions with a reduced efficiency. May be required in mitosis for the processing of stalled or collapsed replication fork intermediates. Plays a role in DNA repair and in genotoxic stress-induced homologous recombination (HR) in somatic cells. Mediates a subset of meiotic recombination events that are insensitive to crossover interference. Together with SEND1, essential for the resolution of toxic replication structures to ensure genome stability, and to maintain telomere integrity and replication. This is Crossover junction endonuclease MUS81 from Arabidopsis thaliana (Mouse-ear cress).